The following is a 312-amino-acid chain: Putative mitochondrial transporter UCP3 (312 aa).

Over 1–10 the chain is Mitochondrial intermembrane; it reads MVGLKPSDVP. A helical membrane pass occupies residues 11–32; the sequence is PTMAVKFLGAGTAACFADLVTF. Solcar repeat units lie at residues 11 to 105, 114 to 206, and 215 to 300; these read PTMA…VKQV, SSLT…LKEK, and DNFP…LKRA. Topologically, residues 33 to 76 are mitochondrial matrix; the sequence is PLDTAKVRLQIQGENQAVQTARLVQYRGVLGTILTMVRTEGPCS. The helical transmembrane segment at 77 to 99 threads the bilayer; sequence PYNGLVAGLQRQMSFASIRIGLY. The Mitochondrial intermembrane portion of the chain corresponds to 100–119; sequence DSVKQVYTPKGADNSSLTTR. The helical transmembrane segment at 120 to 136 threads the bilayer; the sequence is ILAGCTTGAMAVTCAQP. Residues 137–183 lie on the Mitochondrial matrix side of the membrane; the sequence is TDVVKVRFQASIHLGPSRSDRKYSGTMDAYRTIAREEGVRGLWKGTL. Residues 184–200 traverse the membrane as a helical segment; sequence PNIMRNAIVNCAEVVTY. Residues 201–217 are Mitochondrial intermembrane-facing; it reads DILKEKLLDYHLLTDNF. Residues 218–237 traverse the membrane as a helical segment; it reads PCHFVSAFGAGFCATVVASP. The Mitochondrial matrix segment spans residues 238-271; sequence VDVVKTRYMNSPPGQYFSPLDCMIKMVAQEGPTA. A helical transmembrane segment spans residues 272 to 294; sequence FYKGFTPSFLRLGSWNVVMFVTY. The interval 279–301 is purine nucleotide binding; the sequence is SFLRLGSWNVVMFVTYEQLKRAL. The Mitochondrial intermembrane portion of the chain corresponds to 295–312; the sequence is EQLKRALMKVQMLRESPF.

This sequence belongs to the mitochondrial carrier (TC 2.A.29) family. As to quaternary structure, interacts with HAX1; the interaction is direct and calcium-dependent. Only in skeletal muscle and heart. Also expressed in white and brown adipose tissues. Is more expressed in glycolytic than in oxidative skeletal muscles.

The protein resides in the mitochondrion inner membrane. The proton transporter activity is activated by fatty acids (in vitro). The proton transporter activity is inhibited by ATP and ADP (in vitro). The effect of Ubiquinone/coenzyme Q10 on the proton transporter activity in reconstituted membranes is unclear (in vitro). Putative transmembrane transporter that plays a role in mitochondrial metabolism via an as yet unclear mechanism. Originally, this mitochondrial protein was thought to act as a proton transmembrane transporter from the mitochondrial intermembrane space into the matrix, causing proton leaks through the inner mitochondrial membrane, thereby uncoupling mitochondrial membrane potential generation from ATP synthesis. However, this function is controversial and uncoupling may not be the function, or at least not the main function, but rather a consequence of more conventional metabolite transporter activity. The polypeptide is Putative mitochondrial transporter UCP3 (Homo sapiens (Human)).